A 448-amino-acid polypeptide reads, in one-letter code: Glucose-6-phosphate isomerase (448 aa).

Residue glutamate 290 is the Proton donor of the active site. Catalysis depends on residues histidine 311 and lysine 425.

Belongs to the GPI family.

It is found in the cytoplasm. The enzyme catalyses alpha-D-glucose 6-phosphate = beta-D-fructose 6-phosphate. It participates in carbohydrate biosynthesis; gluconeogenesis. Its pathway is carbohydrate degradation; glycolysis; D-glyceraldehyde 3-phosphate and glycerone phosphate from D-glucose: step 2/4. In terms of biological role, catalyzes the reversible isomerization of glucose-6-phosphate to fructose-6-phosphate. The chain is Glucose-6-phosphate isomerase from Lactococcus lactis subsp. cremoris (strain SK11).